We begin with the raw amino-acid sequence, 176 residues long: Small ribosomal subunit protein uS5 (176 aa).

The S5 DRBM domain occupies 11 to 74 (LSEVLVDVNR…QAAKKRMMKV (64 aa)).

The protein belongs to the universal ribosomal protein uS5 family. As to quaternary structure, part of the 30S ribosomal subunit. Contacts proteins S4 and S8.

Functionally, with S4 and S12 plays an important role in translational accuracy. In terms of biological role, located at the back of the 30S subunit body where it stabilizes the conformation of the head with respect to the body. The protein is Small ribosomal subunit protein uS5 of Rickettsia conorii (strain ATCC VR-613 / Malish 7).